The sequence spans 271 residues: Putative two-component membrane permease complex subunit SMU_746c (271 aa).

2 helical membrane passes run 34-54 and 70-90; these read LAYISMALSFILALVQLTIWM and FFSPIILAIPVFIGLLVPTVP.

Belongs to the UPF0703 family. In terms of assembly, interacts with SMU_747c.

The protein resides in the cell membrane. In terms of biological role, could be part of a two-component membrane permease system responsible for amino acid transport under low pH. Involved in acidogenesis, biofilm formation and low-pH survival. This chain is Putative two-component membrane permease complex subunit SMU_746c, found in Streptococcus mutans serotype c (strain ATCC 700610 / UA159).